The sequence spans 43 residues: Omega-agatoxin-Aa3c (43 aa).

3 disulfide bridges follow: cysteine 2–cysteine 19, cysteine 9–cysteine 25, and cysteine 27–cysteine 38.

This sequence belongs to the neurotoxin 04 (omega-agtx) family. 03 (type II/III omega-agtx) subfamily. In terms of tissue distribution, expressed by the venom gland.

Its subcellular location is the secreted. Omega-agatoxins are antagonists of voltage-gated calcium channels (Cav). This Agelenopsis aperta (North American funnel-web spider) protein is Omega-agatoxin-Aa3c.